Here is a 361-residue protein sequence, read N- to C-terminus: MAGNTIGQLFRVTTFGESHGLALGCIVDGVPPGIPLTEADLQHDLDRRRPGTSRYTTQRREPDQVKILSGVFEGVTTGTSIGLLIENTDQRSQDYGAIKDLFRPGHADYTYEQKYGLRDYRGGGRSSARETAMRVAAGAIAKKYLAAKFGIVIRGCLTQMGDIPLAIKDWDQVEQNPFFCPDPDKIDALDELMRGLKKEGDSIGAKVTVVADGVPPGLGEPVFDRLDADIAHALMSINAVKGVEIGDGFEVVKLRGSENRDEITKAGFQSNHAGGILGGISSGQQIVANIALKPTSSITVPGHTINRFGEEVEMITKGRHDPCVGIRAVPIAEAMLAIVLMDHFMRQRAQNGDVTTTIPRW.

Residues Arg-48 and Arg-54 each coordinate NADP(+). Residues Arg-125–Ser-127, Asn-238–Ala-239, Gly-278, Lys-293–Ser-297, and Arg-319 each bind FMN.

The protein belongs to the chorismate synthase family. As to quaternary structure, homotetramer. FMNH2 is required as a cofactor.

The enzyme catalyses 5-O-(1-carboxyvinyl)-3-phosphoshikimate = chorismate + phosphate. Its pathway is metabolic intermediate biosynthesis; chorismate biosynthesis; chorismate from D-erythrose 4-phosphate and phosphoenolpyruvate: step 7/7. Its function is as follows. Catalyzes the anti-1,4-elimination of the C-3 phosphate and the C-6 proR hydrogen from 5-enolpyruvylshikimate-3-phosphate (EPSP) to yield chorismate, which is the branch point compound that serves as the starting substrate for the three terminal pathways of aromatic amino acid biosynthesis. This reaction introduces a second double bond into the aromatic ring system. The chain is Chorismate synthase from Klebsiella pneumoniae subsp. pneumoniae (strain ATCC 700721 / MGH 78578).